A 311-amino-acid polypeptide reads, in one-letter code: MKVAVLGAAGGIGQALALLLKTQLPAGSKLSLYDIAPVTPGVAVDLSHIPTAVEVKGFAGEDPTPALEGADVVLISAGVARKPGMDRSDLFNINAGIVRNLVEKCAATCPKALIGIITNPVNTTVAIAAEVLKAAGVYDKNRLFGVTTLDVIRSETFVAEAKGLNVADVKVNVIGGHSGVTILPLLSQIEGVSFSDEEVAALTTRIQNAGTEVVEAKAGGGSATLSMGQAACRFGLSLVRGLQGEANVVECAYVDGGSEHADFFAQPVLLGKNGIEQVLAYGEVSEFEANARDAMLDTLKADITLGVDFVK.

NAD(+)-binding positions include G7–G13 and D34. The substrate site is built by R81 and R87. Residues N94 and I117–N119 contribute to the NAD(+) site. Residues N119 and R153 each coordinate substrate. H177 serves as the catalytic Proton acceptor. Residue M227 coordinates NAD(+).

The protein belongs to the LDH/MDH superfamily. MDH type 1 family. In terms of assembly, homodimer.

It carries out the reaction (S)-malate + NAD(+) = oxaloacetate + NADH + H(+). Its function is as follows. Catalyzes the reversible oxidation of malate to oxaloacetate. This chain is Malate dehydrogenase, found in Shewanella loihica (strain ATCC BAA-1088 / PV-4).